The chain runs to 191 residues: Protein GrpE (191 aa).

Residues 1–13 (MSEKKNKKEKLAE) show a composition bias toward basic and acidic residues. The disordered stretch occupies residues 1–40 (MSEKKNKKEKLAEEIEQEELNSLDESVETVEEEATEETLT). Over residues 14–40 (EIEQEELNSLDESVETVEEEATEETLT) the composition is skewed to acidic residues.

This sequence belongs to the GrpE family. In terms of assembly, homodimer.

The protein localises to the cytoplasm. In terms of biological role, participates actively in the response to hyperosmotic and heat shock by preventing the aggregation of stress-denatured proteins, in association with DnaK and GrpE. It is the nucleotide exchange factor for DnaK and may function as a thermosensor. Unfolded proteins bind initially to DnaJ; upon interaction with the DnaJ-bound protein, DnaK hydrolyzes its bound ATP, resulting in the formation of a stable complex. GrpE releases ADP from DnaK; ATP binding to DnaK triggers the release of the substrate protein, thus completing the reaction cycle. Several rounds of ATP-dependent interactions between DnaJ, DnaK and GrpE are required for fully efficient folding. The chain is Protein GrpE from Listeria innocua serovar 6a (strain ATCC BAA-680 / CLIP 11262).